A 557-amino-acid polypeptide reads, in one-letter code: Putative UDP-glucuronate:xylan alpha-glucuronosyltransferase 4 (557 aa).

Residues 11 to 31 (KIFMIYLILVSLSLLGLILPF) form a helical; Signal-anchor for type II membrane protein membrane-spanning segment. Mn(2+)-binding residues include Asp365 and Asp367. Substrate contacts are provided by residues 365-367 (DAD), 394-396 (NSG), 421-425 (NGGDQ), and 466-471 (HYLGLK). Mn(2+) is bound at residue His466.

This sequence belongs to the glycosyltransferase 8 family. Glycogenin subfamily. The cofactor is Mn(2+).

The protein localises to the golgi apparatus membrane. In terms of biological role, may be involved in the substitutions of the xylan backbone in stem glucuronoxylan. This chain is Putative UDP-glucuronate:xylan alpha-glucuronosyltransferase 4 (GUX4), found in Arabidopsis thaliana (Mouse-ear cress).